Consider the following 1320-residue polypeptide: Phosphoribosylformylglycinamidine synthase (1320 aa).

ATP contacts are provided by residues 310-321 (GAATGSGGEIRD) and Ala-686. 4 residues coordinate Mg(2+): Asp-687, Glu-726, Asn-730, and Asp-894. Ser-896 lines the ATP pocket. One can recognise a Glutamine amidotransferase type-1 domain in the interval 1067 to 1320 (VAILREQGVN…MFRNARAFIG (254 aa)). Cys-1160 serves as the catalytic Nucleophile. Residues His-1285 and Glu-1287 contribute to the active site.

It in the N-terminal section; belongs to the FGAMS family. As to quaternary structure, monomer.

It localises to the cytoplasm. It catalyses the reaction N(2)-formyl-N(1)-(5-phospho-beta-D-ribosyl)glycinamide + L-glutamine + ATP + H2O = 2-formamido-N(1)-(5-O-phospho-beta-D-ribosyl)acetamidine + L-glutamate + ADP + phosphate + H(+). It functions in the pathway purine metabolism; IMP biosynthesis via de novo pathway; 5-amino-1-(5-phospho-D-ribosyl)imidazole from N(2)-formyl-N(1)-(5-phospho-D-ribosyl)glycinamide: step 1/2. Its function is as follows. Phosphoribosylformylglycinamidine synthase involved in the purines biosynthetic pathway. Catalyzes the ATP-dependent conversion of formylglycinamide ribonucleotide (FGAR) and glutamine to yield formylglycinamidine ribonucleotide (FGAM) and glutamate. In Colwellia psychrerythraea (strain 34H / ATCC BAA-681) (Vibrio psychroerythus), this protein is Phosphoribosylformylglycinamidine synthase.